The sequence spans 252 residues: Trypsin iota (252 aa).

Residues 1–19 (MAVYGIVATVLVLLLLGDA) form the signal peptide. Positions 20–27 (SDVEATGR) are cleaved as a propeptide — activation peptide. The 223-residue stretch at 28 to 250 (IIGGSDQLIR…LRPWIVKAAN (223 aa)) folds into the Peptidase S1 domain. A disulfide bond links Cys53 and Cys69. Residues His68 and Asp113 each act as charge relay system in the active site. Intrachain disulfides connect Cys175/Cys193 and Cys202/Cys226. Ser206 (charge relay system) is an active-site residue.

This sequence belongs to the peptidase S1 family.

Its subcellular location is the secreted. It localises to the extracellular space. It carries out the reaction Preferential cleavage: Arg-|-Xaa, Lys-|-Xaa.. This Drosophila melanogaster (Fruit fly) protein is Trypsin iota (iotaTry).